The following is a 397-amino-acid chain: 1-deoxy-D-xylulose 5-phosphate reductoisomerase (397 aa).

Residues Ser10, Gly11, Ser12, Ile13, Ala36, Arg37, and Asn124 each contribute to the NADPH site. Residue Lys125 coordinates 1-deoxy-D-xylulose 5-phosphate. Glu126 provides a ligand contact to NADPH. Asp150 contributes to the Mn(2+) binding site. Positions 151, 152, 186, and 209 each coordinate 1-deoxy-D-xylulose 5-phosphate. Glu152 serves as a coordination point for Mn(2+). Gly215 serves as a coordination point for NADPH. 1-deoxy-D-xylulose 5-phosphate-binding residues include Ser222, Asn227, Lys228, and Glu231. Mn(2+) is bound at residue Glu231.

The protein belongs to the DXR family. It depends on Mg(2+) as a cofactor. Requires Mn(2+) as cofactor.

The enzyme catalyses 2-C-methyl-D-erythritol 4-phosphate + NADP(+) = 1-deoxy-D-xylulose 5-phosphate + NADPH + H(+). It functions in the pathway isoprenoid biosynthesis; isopentenyl diphosphate biosynthesis via DXP pathway; isopentenyl diphosphate from 1-deoxy-D-xylulose 5-phosphate: step 1/6. Catalyzes the NADPH-dependent rearrangement and reduction of 1-deoxy-D-xylulose-5-phosphate (DXP) to 2-C-methyl-D-erythritol 4-phosphate (MEP). In Aeromonas salmonicida (strain A449), this protein is 1-deoxy-D-xylulose 5-phosphate reductoisomerase.